The sequence spans 162 residues: Protein-export protein SecB (162 aa).

This sequence belongs to the SecB family. As to quaternary structure, homotetramer, a dimer of dimers. One homotetramer interacts with 1 SecA dimer.

It localises to the cytoplasm. In terms of biological role, one of the proteins required for the normal export of preproteins out of the cell cytoplasm. It is a molecular chaperone that binds to a subset of precursor proteins, maintaining them in a translocation-competent state. It also specifically binds to its receptor SecA. The sequence is that of Protein-export protein SecB from Pseudoalteromonas translucida (strain TAC 125).